The following is a 686-amino-acid chain: DNA ligase (686 aa).

NAD(+)-binding positions include 34–38, 83–84, and E120; these read DAEYD and SI. The N6-AMP-lysine intermediate role is filled by K122. NAD(+)-binding residues include R143, E180, K298, and K322. Positions 420, 423, 438, and 444 each coordinate Zn(2+). Positions 603–686 constitute a BRCT domain; sequence QSGGILSGKT…ALLGSNKKNG (84 aa).

Belongs to the NAD-dependent DNA ligase family. LigA subfamily. Mg(2+) serves as cofactor. Requires Mn(2+) as cofactor.

It catalyses the reaction NAD(+) + (deoxyribonucleotide)n-3'-hydroxyl + 5'-phospho-(deoxyribonucleotide)m = (deoxyribonucleotide)n+m + AMP + beta-nicotinamide D-nucleotide.. Its function is as follows. DNA ligase that catalyzes the formation of phosphodiester linkages between 5'-phosphoryl and 3'-hydroxyl groups in double-stranded DNA using NAD as a coenzyme and as the energy source for the reaction. It is essential for DNA replication and repair of damaged DNA. This is DNA ligase from Thiobacillus denitrificans (strain ATCC 25259 / T1).